Consider the following 332-residue polypeptide: DNA double-strand break repair nuclease NurA (332 aa).

Positions 57 and 132 each coordinate Mn(2+).

This sequence belongs to the NurA family. Mn(2+) serves as cofactor.

Its function is as follows. Involved in DNA double-strand break (DSB) repair. Probably acts with HerA to stimulate resection of the 5' strand and produce the long 3' single-strand that is required for RadA loading. Exhibits both single-stranded endonuclease activity and 5'-3' exonuclease activity on single-stranded and double-stranded DNA. The sequence is that of DNA double-strand break repair nuclease NurA from Sulfolobus acidocaldarius (strain ATCC 33909 / DSM 639 / JCM 8929 / NBRC 15157 / NCIMB 11770).